Here is a 310-residue protein sequence, read N- to C-terminus: MATKNEEILRKPDWLKIKLNTNENYTGLKKMMREKNLHTVCEEAKCPNIHECWGERRTATFMILGAVCTRACRFCAVKTGLPNELDLGEPERVAESVELMNLKHVVITAVARDDLRDAGSNVYAETVRKVRERNPYTTIEILPSDMGGDYDALETLMASKPDILNHNIETVRRLTPRVRARATYDRTLEFLRRSKELQPDIPTKSSIMVGLGETIEELHETMDDLRAADVDILTIGQYLQPSRKHLKVQKYYSPLEFGKLRKVAMEKGFKHCQAGPLVRSSYHADEQVNEAAKERQRIGDEKLEAAKNEA.

[4Fe-4S] cluster is bound by residues Cys-41, Cys-46, Cys-52, Cys-68, Cys-72, Cys-75, and Ser-281. The 217-residue stretch at 54–270 folds into the Radical SAM core domain; sequence GERRTATFMI…RKVAMEKGFK (217 aa). Positions 285–310 are disordered; the sequence is DEQVNEAAKERQRIGDEKLEAAKNEA.

It belongs to the radical SAM superfamily. Lipoyl synthase family. Requires [4Fe-4S] cluster as cofactor.

It is found in the cytoplasm. The enzyme catalyses [[Fe-S] cluster scaffold protein carrying a second [4Fe-4S](2+) cluster] + N(6)-octanoyl-L-lysyl-[protein] + 2 oxidized [2Fe-2S]-[ferredoxin] + 2 S-adenosyl-L-methionine + 4 H(+) = [[Fe-S] cluster scaffold protein] + N(6)-[(R)-dihydrolipoyl]-L-lysyl-[protein] + 4 Fe(3+) + 2 hydrogen sulfide + 2 5'-deoxyadenosine + 2 L-methionine + 2 reduced [2Fe-2S]-[ferredoxin]. Its pathway is protein modification; protein lipoylation via endogenous pathway; protein N(6)-(lipoyl)lysine from octanoyl-[acyl-carrier-protein]. Functionally, catalyzes the radical-mediated insertion of two sulfur atoms into the C-6 and C-8 positions of the octanoyl moiety bound to the lipoyl domains of lipoate-dependent enzymes, thereby converting the octanoylated domains into lipoylated derivatives. The protein is Lipoyl synthase of Staphylococcus carnosus (strain TM300).